The chain runs to 501 residues: Fumarate reductase 2 (501 aa).

The N-terminal 32 residues, 1-32, are a transit peptide targeting the mitochondrion; it reads MIRSVRRVFIYVSIFVLIIVLKRTLSGTDQTS. Residue 37–51 participates in FAD binding; sequence VVVIGSGLAGLTTSN. Active-site residues include H281 and R304.

This sequence belongs to the FAD-dependent oxidoreductase 2 family. FRD/SDH subfamily. FAD is required as a cofactor.

The protein localises to the mitochondrion. The enzyme catalyses succinate + NAD(+) = fumarate + NADH + H(+). Irreversibly catalyzes the reduction of fumarate to succinate. Together with the second isozyme of soluble fumarate reductase (FRD1), essential for anaerobic growth. Involved in maintaining redox balance during oxygen deficiency conditions. Reduction of fumarate is the main source of succinate during fermentation, and under anaerobic conditions, the formation of succinate is strictly required for the reoxidation of FADH(2). In Saccharomyces cerevisiae (strain ATCC 204508 / S288c) (Baker's yeast), this protein is Fumarate reductase 2 (OSM1).